Reading from the N-terminus, the 383-residue chain is tRNA-specific 2-thiouridylase MnmA (383 aa).

Residues 30 to 37 and Met-56 each bind ATP; that span reads GMSGGVDS. Residues 116–118 form an interaction with target base in tRNA region; sequence NPD. The active-site Nucleophile is Cys-121. A disulfide bond links Cys-121 and Cys-218. Position 146 (Gly-146) interacts with ATP. Residues 168 to 170 form an interaction with tRNA region; it reads KDQ. Cys-218 (cysteine persulfide intermediate) is an active-site residue. The interval 330-331 is interaction with tRNA; the sequence is RY.

This sequence belongs to the MnmA/TRMU family.

It localises to the cytoplasm. The enzyme catalyses S-sulfanyl-L-cysteinyl-[protein] + uridine(34) in tRNA + AH2 + ATP = 2-thiouridine(34) in tRNA + L-cysteinyl-[protein] + A + AMP + diphosphate + H(+). Its function is as follows. Catalyzes the 2-thiolation of uridine at the wobble position (U34) of tRNA, leading to the formation of s(2)U34. The protein is tRNA-specific 2-thiouridylase MnmA of Haemophilus influenzae (strain ATCC 51907 / DSM 11121 / KW20 / Rd).